The following is a 200-amino-acid chain: COMM domain-containing protein 7 (200 aa).

Residues 133 to 200 (QLVDMEWKFG…RVRTSMECFS (68 aa)) enclose the COMM domain.

It belongs to the COMM domain-containing protein 7 family. Component of the commander complex consisting of the CCC subcomplex and the retriever subcomplex. Component of the CCC (COMMD/CCDC22/CCDC93) subcomplex consisting of COMMD1, COMMD2, COMMD3, COMMD4, COMMD5, COMMD6, COMMD7, COMMD8, COMMD9, COMMD10, CCDC22 and CCDC93; within the complex forms a heterodimer with COMMD9. Interacts with RELA. Interacts with CCDC22, CCDC93, SCNN1B, CUL7.

The protein localises to the cytoplasmic vesicle. In terms of biological role, scaffold protein in the commander complex that is essential for endosomal recycling of transmembrane cargos; the commander complex is composed of the CCC subcomplex and the retriever subcomplex. May modulate activity of cullin-RING E3 ubiquitin ligase (CRL) complexes. Associates with the NF-kappa-B complex and suppresses its transcriptional activity. This is COMM domain-containing protein 7 (COMMD7) from Bos taurus (Bovine).